Reading from the N-terminus, the 276-residue chain is Rhamnulose-1-phosphate aldolase (276 aa).

The active site involves Glu-117. Zn(2+) contacts are provided by His-141, His-143, and His-212.

Belongs to the aldolase class II family. RhaD subfamily. As to quaternary structure, homotetramer. It depends on Zn(2+) as a cofactor.

Its subcellular location is the cytoplasm. It carries out the reaction L-rhamnulose 1-phosphate = (S)-lactaldehyde + dihydroxyacetone phosphate. It participates in carbohydrate degradation; L-rhamnose degradation; glycerone phosphate from L-rhamnose: step 3/3. Catalyzes the reversible cleavage of L-rhamnulose-1-phosphate to dihydroxyacetone phosphate (DHAP) and L-lactaldehyde. The protein is Rhamnulose-1-phosphate aldolase of Klebsiella pneumoniae (strain 342).